The chain runs to 545 residues: MYLSIIILPLLGSIVAGFFGRKVGVSGAQLITCLSVIITTGLAILAFFEVGFNNIPVTINLFRWIDSEWYNILWGFQFDSLTVAMLIPVLIISSLVHIYSISYMSHDPHNQRFFSYLSLFTFMMIILVTANNYLLMFVGWEGVGVCSYLLVSFWFTRIAANQSSMSAFLTNRVGDCFLTIGMFVVLWTLGNLDYATVFSLAPYINSDIATIIGICLLIGAMAKSSQVGLHVWLPMAMEGFFSRAFLKLHYMQEHPVLSLGPLRFSLFGKIQDQGQFAGNSIRSSSEITSEAFMLKESWFKWWFIGFVEGDGSFIINKDGYLEFRITQSSPDAQILFMIKKELGFGVVRKQDSVRNTHCYRVRDKNNLIKLISIFNGNIFLDTRKEQFKLWLNAFNLKYKENIPHIDSSFRPNLDNAWLSGFTDAEGCFTCSVYDNKSNTAKLVRLRYILSQKGNSSCMEYLAEILGGKKHLLKSYEGYNVTVNTTKLSPIVQYFNLYPLKTKKYITYFNWIKIYKLVIDKKHNDPENLLLIMKYKNNINKSDYNK.

Transmembrane regions (helical) follow at residues M1 to R21, L30 to V50, L81 to I101, L119 to G139, W140 to A160, F177 to V197, and L200 to A220. The tract at residues M1–G239 is ndh-5 exons 1 and 2 encoded. Residues F240 to K545 are ndh-5 intron 2 encoded.

This sequence in the N-terminal section; belongs to the complex I subunit 5 family. In the C-terminal section; belongs to the LAGLIDADG endonuclease family.

It is found in the mitochondrion membrane. Its function is as follows. Mitochondrial DNA endonuclease involved in intron homing. The sequence is that of Probable intron-encoded endonuclease 4 from Neurospora crassa (strain ATCC 24698 / 74-OR23-1A / CBS 708.71 / DSM 1257 / FGSC 987).